The primary structure comprises 390 residues: Chorismate synthase (390 aa).

2 residues coordinate NADP(+): R40 and R46. FMN is bound by residues 129–131 (RAS), 249–250 (QA), G294, 309–313 (KPIPT), and R335.

It belongs to the chorismate synthase family. In terms of assembly, homotetramer. The cofactor is FMNH2.

The enzyme catalyses 5-O-(1-carboxyvinyl)-3-phosphoshikimate = chorismate + phosphate. Its pathway is metabolic intermediate biosynthesis; chorismate biosynthesis; chorismate from D-erythrose 4-phosphate and phosphoenolpyruvate: step 7/7. In terms of biological role, catalyzes the anti-1,4-elimination of the C-3 phosphate and the C-6 proR hydrogen from 5-enolpyruvylshikimate-3-phosphate (EPSP) to yield chorismate, which is the branch point compound that serves as the starting substrate for the three terminal pathways of aromatic amino acid biosynthesis. This reaction introduces a second double bond into the aromatic ring system. This chain is Chorismate synthase, found in Desulforudis audaxviator (strain MP104C).